Consider the following 367-residue polypeptide: Uroporphyrinogen decarboxylase (367 aa).

Substrate-binding positions include Arg-27–Arg-31, Asp-77, Tyr-157, Thr-212, and His-333.

Belongs to the uroporphyrinogen decarboxylase family. Homodimer.

It is found in the cytoplasm. The enzyme catalyses uroporphyrinogen III + 4 H(+) = coproporphyrinogen III + 4 CO2. Its pathway is porphyrin-containing compound metabolism; protoporphyrin-IX biosynthesis; coproporphyrinogen-III from 5-aminolevulinate: step 4/4. Functionally, catalyzes the decarboxylation of four acetate groups of uroporphyrinogen-III to yield coproporphyrinogen-III. In Cupriavidus metallidurans (strain ATCC 43123 / DSM 2839 / NBRC 102507 / CH34) (Ralstonia metallidurans), this protein is Uroporphyrinogen decarboxylase.